The sequence spans 300 residues: Diphthine methyl ester synthase (300 aa).

Residues leucine 9, aspartate 85, glycine 88, 113 to 114 (SV), and leucine 164 each bind S-adenosyl-L-methionine. At serine 172 the chain carries Phosphoserine. S-adenosyl-L-methionine-binding residues include leucine 222 and histidine 247. Serine 298 carries the post-translational modification Phosphoserine.

It belongs to the diphthine synthase family.

The protein resides in the cytoplasm. The enzyme catalyses 2-[(3S)-amino-3-carboxypropyl]-L-histidyl-[translation elongation factor 2] + 4 S-adenosyl-L-methionine = diphthine methyl ester-[translation elongation factor 2] + 4 S-adenosyl-L-homocysteine + 3 H(+). It participates in protein modification; peptidyl-diphthamide biosynthesis. Functionally, S-adenosyl-L-methionine-dependent methyltransferase that catalyzes four methylations of the modified target histidine residue in translation elongation factor 2 (EF-2), to form an intermediate called diphthine methyl ester. The four successive methylation reactions represent the second step of diphthamide biosynthesis. This chain is Diphthine methyl ester synthase (DPH5), found in Saccharomyces cerevisiae (strain ATCC 204508 / S288c) (Baker's yeast).